A 504-amino-acid chain; its full sequence is Arabinose import ATP-binding protein AraG (504 aa).

ABC transporter domains lie at 8–243 (LSFR…MVGR) and 256–499 (YGEE…MPKV). ATP is bound at residue 40-47 (GENGAGKS).

It belongs to the ABC transporter superfamily. Arabinose importer (TC 3.A.1.2.2) family. The complex is composed of two ATP-binding proteins (AraG), two transmembrane proteins (AraH) and a solute-binding protein (AraF).

It is found in the cell inner membrane. It catalyses the reaction L-arabinose(out) + ATP + H2O = L-arabinose(in) + ADP + phosphate + H(+). In terms of biological role, part of the ABC transporter complex AraFGH involved in arabinose import. Responsible for energy coupling to the transport system. This is Arabinose import ATP-binding protein AraG from Escherichia coli O6:K15:H31 (strain 536 / UPEC).